The following is a 1849-amino-acid chain: NADH-ubiquinone oxidoreductase chain 5 (1849 aa).

41 helical membrane passes run 76–93 (YLLL…TVCY), 98–120 (LILL…YLQY), 190–212 (YWLC…IIGW), 222–244 (LVPT…IYLY), 279–301 (HLLT…ILSS), 316–338 (LALQ…ILCY), 358–380 (LEII…ILSV), 390–412 (VIIL…TILI), 419–441 (IAVY…IWLL), 483–505 (LLDA…CLGV), 510–532 (LFIA…LQVV), 536–558 (ISYI…VYSI), 565–587 (LIMY…IHTI), 621–640 (IWLI…STLV), 683–705 (WVRF…YVQF), 718–740 (LTRI…QGIL), 745–767 (IISY…LTIL), 797–819 (PTWV…LVTV), 868–890 (ILLL…LLSL), 905–927 (LTVQ…YIVL), 966–988 (LYSY…SLLE), 1008–1030 (PDLL…ELLL), 1073–1095 (LTVV…QILF), 1105–1127 (LATI…LSYL), 1172–1194 (TYLL…IYII), 1219–1241 (VYFL…FFYH), 1248–1270 (GIFY…TLYY), 1296–1318 (IITF…AIIL), 1330–1352 (FAYN…IVSY), 1357–1379 (MIIF…YARI), 1418–1440 (LFAL…FDFT), 1444–1466 (VIVF…FVWL), 1478–1500 (ALIH…APIL), 1504–1526 (VYTL…ILAT), 1533–1555 (KAVA…FLAF), 1559–1581 (LIYL…YIVH), 1602–1624 (IAIY…GFFA), 1639–1661 (VATF…LYRI), 1719–1741 (LLHL…LVTG), 1773–1795 (VRNI…TAIN), and 1802–1824 (IIYL…HYFL).

This sequence belongs to the complex I subunit 5 family.

The protein localises to the hydrogenosome membrane. It catalyses the reaction a ubiquinone + NADH + 5 H(+)(in) = a ubiquinol + NAD(+) + 4 H(+)(out). This Nyctotherus ovalis protein is NADH-ubiquinone oxidoreductase chain 5 (nad5).